We begin with the raw amino-acid sequence, 292 residues long: Ribosomal protein L11 methyltransferase (292 aa).

4 residues coordinate S-adenosyl-L-methionine: Thr-138, Gly-159, Asp-181, and Asn-225.

This sequence belongs to the methyltransferase superfamily. PrmA family.

Its subcellular location is the cytoplasm. The catalysed reaction is L-lysyl-[protein] + 3 S-adenosyl-L-methionine = N(6),N(6),N(6)-trimethyl-L-lysyl-[protein] + 3 S-adenosyl-L-homocysteine + 3 H(+). Its function is as follows. Methylates ribosomal protein L11. The sequence is that of Ribosomal protein L11 methyltransferase from Leuconostoc citreum (strain KM20).